Here is a 419-residue protein sequence, read N- to C-terminus: Carboxypeptidase A1 (419 aa).

Residues 1 to 16 form the signal peptide; that stretch reads MKRLLVLSVLLAAVFG. Residues 17-110 constitute a propeptide, activation peptide; sequence NENFVGHQVL…KQQMSAFQAR (94 aa). Residues 121–414 enclose the Peptidase M14 domain; it reads TYHTLDEIYE…LALLTIMDHT (294 aa). Residues histidine 179 and glutamate 182 each coordinate Zn(2+). Substrate contacts are provided by residues 179–182, arginine 237, and 254–255; these read HSRE and NR. Cysteine 248 and cysteine 271 are oxidised to a cystine. Histidine 306 contributes to the Zn(2+) binding site. Residues 307–308 and tyrosine 358 contribute to the substrate site; that span reads SY. Glutamate 380 (proton donor/acceptor) is an active-site residue.

Belongs to the peptidase M14 family. In terms of assembly, monomer. Zn(2+) is required as a cofactor.

It localises to the secreted. It catalyses the reaction Release of a C-terminal amino acid, but little or no action with -Asp, -Glu, -Arg, -Lys or -Pro.. In terms of biological role, carboxypeptidase that catalyzes the release of a C-terminal amino acid, but has little or no action with -Asp, -Glu, -Arg, -Lys or -Pro. The chain is Carboxypeptidase A1 (Cpa1) from Mus musculus (Mouse).